The primary structure comprises 550 residues: Iduronate 2-sulfatase (550 aa).

The first 25 residues, 1–25 (MPPPRTGRGLLWLGLVLSSVCVALG), serve as a signal peptide directing secretion. The propeptide occupies 26–33 (SETQANST). Ca(2+) contacts are provided by D45, D46, and C84. The Nucleophile role is filled by C84. C84 bears the 3-oxoalanine (Cys) mark. N115 carries an N-linked (GlcNAc...) asparagine glycan. Residue H138 is part of the active site. N-linked (GlcNAc...) asparagine glycosylation is present at N144. A disulfide bridge connects residues C171 and C184. N246, N280, and N325 each carry an N-linked (GlcNAc...) asparagine glycan. The Ca(2+) site is built by D334 and H335. C422 and C432 are oxidised to a cystine. N-linked (GlcNAc...) asparagine glycans are attached at residues N513 and N537.

This sequence belongs to the sulfatase family. In terms of assembly, monomer. The 58-kDa mature form is composed of two chains resulting from proteolitic processing, the 42-kDa chain and the 14-kDa chain that remain stably associated and form the 58-kDa intermediate form which is enzymatically active. Ca(2+) serves as cofactor. In terms of processing, synthesized as a 75-kDa precursor form in the endoplasmic reticulum (ER), and then processed by proteolytic cleavage through various intermediates to yield a 55-kDa mature form, with the release of an 18 kDa polypeptide. The conversion to 3-oxoalanine (also known as C-formylglycine, FGly), of a serine or cysteine residue in prokaryotes and of a cysteine residue in eukaryotes, is critical for catalytic activity. As to expression, liver, kidney, lung, and placenta.

Its subcellular location is the lysosome. It catalyses the reaction Hydrolysis of the 2-sulfate groups of the L-iduronate 2-sulfate units of dermatan sulfate, heparan sulfate and heparin.. Lysosomal enzyme involved in the degradation pathway of dermatan sulfate and heparan sulfate. This is Iduronate 2-sulfatase (IDS) from Homo sapiens (Human).